Here is a 382-residue protein sequence, read N- to C-terminus: Dual-specificity RNA methyltransferase RlmN (382 aa).

Catalysis depends on Glu-91, which acts as the Proton acceptor. A Radical SAM core domain is found at 97–339 (EEDRGTLCIS…TTIRKTRGDD (243 aa)). Cys-104 and Cys-344 are oxidised to a cystine. 3 residues coordinate [4Fe-4S] cluster: Cys-111, Cys-115, and Cys-118. S-adenosyl-L-methionine is bound by residues 165–166 (GE), Ser-197, 219–221 (SLH), and Asn-301. Residue Cys-344 is the S-methylcysteine intermediate of the active site.

The protein belongs to the radical SAM superfamily. RlmN family. [4Fe-4S] cluster serves as cofactor.

It localises to the cytoplasm. The enzyme catalyses adenosine(2503) in 23S rRNA + 2 reduced [2Fe-2S]-[ferredoxin] + 2 S-adenosyl-L-methionine = 2-methyladenosine(2503) in 23S rRNA + 5'-deoxyadenosine + L-methionine + 2 oxidized [2Fe-2S]-[ferredoxin] + S-adenosyl-L-homocysteine. The catalysed reaction is adenosine(37) in tRNA + 2 reduced [2Fe-2S]-[ferredoxin] + 2 S-adenosyl-L-methionine = 2-methyladenosine(37) in tRNA + 5'-deoxyadenosine + L-methionine + 2 oxidized [2Fe-2S]-[ferredoxin] + S-adenosyl-L-homocysteine. In terms of biological role, specifically methylates position 2 of adenine 2503 in 23S rRNA and position 2 of adenine 37 in tRNAs. m2A2503 modification seems to play a crucial role in the proofreading step occurring at the peptidyl transferase center and thus would serve to optimize ribosomal fidelity. In Albidiferax ferrireducens (strain ATCC BAA-621 / DSM 15236 / T118) (Rhodoferax ferrireducens), this protein is Dual-specificity RNA methyltransferase RlmN.